Consider the following 377-residue polypeptide: Succinyl-diaminopimelate desuccinylase (377 aa).

His-67 contacts Zn(2+). Asp-69 is an active-site residue. Zn(2+) is bound at residue Asp-100. Glu-134 functions as the Proton acceptor in the catalytic mechanism. Residues Glu-135, Glu-163, and His-349 each coordinate Zn(2+).

Belongs to the peptidase M20A family. DapE subfamily. As to quaternary structure, homodimer. It depends on Zn(2+) as a cofactor. The cofactor is Co(2+).

The catalysed reaction is N-succinyl-(2S,6S)-2,6-diaminopimelate + H2O = (2S,6S)-2,6-diaminopimelate + succinate. It participates in amino-acid biosynthesis; L-lysine biosynthesis via DAP pathway; LL-2,6-diaminopimelate from (S)-tetrahydrodipicolinate (succinylase route): step 3/3. In terms of biological role, catalyzes the hydrolysis of N-succinyl-L,L-diaminopimelic acid (SDAP), forming succinate and LL-2,6-diaminopimelate (DAP), an intermediate involved in the bacterial biosynthesis of lysine and meso-diaminopimelic acid, an essential component of bacterial cell walls. This is Succinyl-diaminopimelate desuccinylase from Dechloromonas aromatica (strain RCB).